We begin with the raw amino-acid sequence, 123 residues long: Small ribosomal subunit protein uS12 (123 aa).

The protein belongs to the universal ribosomal protein uS12 family. Part of the 30S ribosomal subunit. Contacts proteins S8 and S17. May interact with IF1 in the 30S initiation complex.

In terms of biological role, with S4 and S5 plays an important role in translational accuracy. Interacts with and stabilizes bases of the 16S rRNA that are involved in tRNA selection in the A site and with the mRNA backbone. Located at the interface of the 30S and 50S subunits, it traverses the body of the 30S subunit contacting proteins on the other side and probably holding the rRNA structure together. The combined cluster of proteins S8, S12 and S17 appears to hold together the shoulder and platform of the 30S subunit. The sequence is that of Small ribosomal subunit protein uS12 from Corynebacterium diphtheriae (strain ATCC 700971 / NCTC 13129 / Biotype gravis).